Reading from the N-terminus, the 279-residue chain is 3-methyl-2-oxobutanoate hydroxymethyltransferase (279 aa).

The Mg(2+) site is built by Asp43 and Asp82. 3-methyl-2-oxobutanoate contacts are provided by residues 43 to 44 (DS), Asp82, and Lys112. Position 114 (Glu114) interacts with Mg(2+). Glu181 acts as the Proton acceptor in catalysis.

The protein belongs to the PanB family. In terms of assembly, homodecamer; pentamer of dimers. Mg(2+) serves as cofactor.

It localises to the cytoplasm. It carries out the reaction 3-methyl-2-oxobutanoate + (6R)-5,10-methylene-5,6,7,8-tetrahydrofolate + H2O = 2-dehydropantoate + (6S)-5,6,7,8-tetrahydrofolate. The protein operates within cofactor biosynthesis; (R)-pantothenate biosynthesis; (R)-pantoate from 3-methyl-2-oxobutanoate: step 1/2. In terms of biological role, catalyzes the reversible reaction in which hydroxymethyl group from 5,10-methylenetetrahydrofolate is transferred onto alpha-ketoisovalerate to form ketopantoate. This chain is 3-methyl-2-oxobutanoate hydroxymethyltransferase, found in Shouchella clausii (strain KSM-K16) (Alkalihalobacillus clausii).